Here is a 4293-residue protein sequence, read N- to C-terminus: Polycystin-1 (4293 aa).

An N-terminal signal peptide occupies residues 1-23 (MPLGAPALLALALGLGLWLGALA). The LRRNT domain occupies 24–67 (GDPGRGCGPCPLPCFCGPAPDAACRVNCSGRWLQTLGPSLRIPA). The Extracellular segment spans residues 24 to 3066 (GDPGRGCGPC…IFPEPSASIN (3043 aa)). Residues Asn-50 and Asn-89 are each glycosylated (N-linked (GlcNAc...) asparagine). 2 LRR repeats span residues 68 to 91 (DATALDLSHNLLQTLDIGLLVNLS) and 92 to 113 (ALVELDLSNNRISTLEEGVFAN). Asn-116 and Asn-121 each carry an N-linked (GlcNAc...) asparagine glycan. An LRRCT domain is found at 125 to 178 (NPFECNCGLAWLPRWAKEHQVHVVQSEATTCRGPIPLAGQPLLSIPLLDNACGE). Residues 177–271 (GEEYVACLPD…PTLLQHTFPA (95 aa)) enclose the WSC domain. Residues Asn-187 and Asn-239 are each glycosylated (N-linked (GlcNAc...) asparagine). Residues 272–359 (SPGATLVGPH…VQVEATPTVL (88 aa)) form the PKD 1 domain. Residue Asn-370 is glycosylated (N-linked (GlcNAc...) asparagine). Residues 415-530 (GNGHCYRLVA…CSAPHSYVCE (116 aa)) form the C-type lectin domain. 2 disulfide bridges follow: Cys-436/Cys-529 and Cys-507/Cys-521. The interval 613–632 (GGAAAVPEGSSEPDNRTEPA) is disordered. N-linked (GlcNAc...) asparagine glycosylation is present at Asn-627. An LDL-receptor class A; atypical domain is found at 633 to 666 (PKCVPEELWCPGANVCIPFDASCNSHVCINGSVS). Disulfide bonds link Cys-635/Cys-648 and Cys-642/Cys-660. N-linked (GlcNAc...) asparagine glycosylation is found at Asn-662, Asn-740, Asn-804, Asn-835, Asn-848, Asn-859, Asn-884, Asn-915, Asn-998, Asn-1004, Asn-1028, Asn-1084, Asn-1096, Asn-1107, Asn-1172, Asn-1188, Asn-1234, Asn-1263, Asn-1330, Asn-1342, Asn-1376, Asn-1444, Asn-1449, Asn-1468, Asn-1535, Asn-1548, Asn-1557, Asn-1643, Asn-1657, Asn-1706, Asn-1730, Asn-1788, Asn-1831, Asn-1863, and Asn-1876. PKD domains lie at 849–922 (ATAT…RVTA), 929–1014 (LRAV…NKMH), 1017–1123 (WVSA…LPNV), 1121–1209 (PNVA…LHGL), 1207–1292 (HGLT…EVLH), 1288–1377 (LEVL…IRNI), 1376–1463 (NITL…VLVT), 1462–1545 (VTGI…VRGL), 1544–1629 (GLTI…IEGL), 1630–1718 (QVAG…VESL), 1716–1802 (ESLI…VGGL), 1804–1886 (IRTS…IVNL), 1885–1970 (NLML…VVGL), 1972–2053 (VPNC…MVEV), and 2056–2144 (IIQY…ACRE). Residues Asn-1987, Asn-2046, Asn-2070, Asn-2121, Asn-2244, Asn-2349, Asn-2391, Asn-2408, Asn-2414, Asn-2563, Asn-2640, Asn-2713, Asn-2749, Asn-2813, Asn-2836, Asn-2873, Asn-2948, and Asn-2986 are each glycosylated (N-linked (GlcNAc...) asparagine). The REJ domain maps to 2142 to 2828 (CREPEVEVAL…QLIFLVDSNP (687 aa)). The region spanning 2857 to 3055 (PIEQLAAERA…SLFVPPSHVQ (199 aa)) is the GAIN-B domain. Cys-3007 and Cys-3035 are joined by a disulfide. The tract at residues 3007-3055 (CQYFSEEMMMWRTEGIVPLEETSPSQAVCLTRHLTAFGASLFVPPSHVQ) is GPS. Residues 3067 to 3087 (YIVLLTCVICLVTYVVMAMIL) traverse the membrane as a helical segment. The Cytoplasmic segment spans residues 3088-3269 (RKLDQLDVSR…DRPPRSRFTR (182 aa)). A PLAT domain is found at 3110–3225 (FKYEILVKTG…EANGGLVEKE (116 aa)). Residues 3270–3290 (VQRVTCCVLLLCLFLAANAVW) form a helical membrane-spanning segment. At 3291–3315 (YGVVRDTTYSMGPVSSLISPGVDTV) the chain is on the extracellular side. A helical transmembrane segment spans residues 3316 to 3336 (AIGLVSSVVVYPVYLAVLFLF). Over 3337 to 3549 (RMSRSKVSGD…LPAWCAPLAH (213 aa)) the chain is Cytoplasmic. A helical transmembrane segment spans residues 3550 to 3570 (GLSLLLVAVAVAVSGWIGASF). Over 3571–3572 (PP) the chain is Extracellular. Residues 3573 to 3593 (SVSVMWLLSSSSSFLASFLGW) traverse the membrane as a helical segment. At 3594 to 3655 (EPLKVLLEAL…LAKEEARKVK (62 aa)) the chain is on the cytoplasmic side. Residues 3656–3676 (RLHDMLKRLLVYMLFLLVTLL) traverse the membrane as a helical segment. Residues 3677-3891 (ANYGDASCHG…RLSTGLSLPL (215 aa)) are Extracellular-facing. Residues Asn-3728 and Asn-3780 are each glycosylated (N-linked (GlcNAc...) asparagine). The chain crosses the membrane as a helical span at residues 3892 to 3912 (LTSVCLLLFALYFSMAEVQTW). Over 3913 to 3925 (RKDGCACTARPDT) the chain is Cytoplasmic. A helical membrane pass occupies residues 3926-3946 (WARCLLVILTAATGLVRLAQL). Residues 3947–3974 (GIADRQWTHFVQDHPRHFTSFDQVAQLG) are Extracellular-facing. A helical transmembrane segment spans residues 3975–3995 (SVARGLAASLLFLLLVKAAQQ). Residues 3996 to 4017 (LRFVRQWSVFGKTLCRALPELM) are Cytoplasmic-facing. Residues 4018 to 4038 (GATLGLVLLGVAYAQMAILLI) traverse the membrane as a helical segment. Residues 4039–4080 (SSGADTLYNMARAFLVLCPGARVPTLCPSESWYLSPLLCVGL) are Extracellular-facing. A helical transmembrane segment spans residues 4081 to 4100 (WALRVWGALRLGAILLRWRY). Over 4101-4293 (HALRGELYRP…PNNKVHPSST (193 aa)) the chain is Cytoplasmic. Disordered stretches follow at residues 4150 to 4197 (PLPS…STLK) and 4235 to 4293 (SLQG…PSST). Over residues 4153–4172 (SRSSRGSKSSPVVLPPSSGS) the composition is skewed to low complexity. A Phosphoserine; by PRKX; in vitro modification is found at Ser-4156. Positions 4173 to 4195 (EASHPSTSSSQPDGPSASLSRST) are enriched in polar residues. Positions 4210–4241 (ESLLVQFDRLNQATEDVYQLEQQLQSLQGHGH) form a coiled coil. A compositionally biased stretch (low complexity) spans 4238-4256 (GHGHNGPPSSPSPGCFPGS). Polar residues predominate over residues 4265 to 4276 (SRASQGLDQTVG).

It belongs to the polycystin family. In terms of assembly, component of the heterotetrameric polycystin channel complex with PKD2; the tetramer contains one PKD1 chain and three PKD2 chains. Interacts with PKD2; the interaction is required for ciliary localization. Interacts with PKD2L1. Interacts with PRKX; involved in differentiation and controlled morphogenesis of the kidney. Interacts (via extracellular domain) with WNT3A, WNT4 and WNT9B. Interacts with WNT5A, DVL1 and DVL2. Interacts with NPHP1 (via SH3 domain). Interacts with BBS1, BBS4, BBS5 and TTC8. Interacts with RGS7. Interacts (via C-terminal domain) with RABEP1; the interaction connects PKD1:PKD2 to GGA1 and ARL3 that mediate the ciliary targeting. Interacts (via the PKD repeats in the N-terminal extracellular region) with EPCIP; the interaction is not dependent on N-glycosylation of either protein. Post-translationally, N-glycosylated. After synthesis, undergoes autoproteolytic cleavage between Leu-3040 and Thr-3041 in the GPS region of the GAIN-B domain. Cleavage at the GPS region occurs through a cis-autoproteolytic mechanism involving an ester-intermediate via N-O acyl rearrangement. This process takes place in the early secretory pathway, depends on initial N-glycosylation, and requires the REJ domain. PKD1 is ubiquitously and incompletely cleaved in wild-type mice, so that uncleaved and cleaved PKD1 molecules coexist. The differential patterns of cleavage during embryonic development, as well as in adult mice, suggest different functions of uncleaved and cleaved molecules.

The protein localises to the cell membrane. The protein resides in the cell projection. It localises to the cilium. It is found in the endoplasmic reticulum. Its subcellular location is the golgi apparatus. The protein localises to the vesicle. The protein resides in the secreted. It localises to the extracellular exosome. Functionally, component of a heteromeric calcium-permeable ion channel formed by PKD1 and PKD2 that is activated by interaction between PKD1 and a Wnt family member, such as WNT3A and WNT9B. Both PKD1 and PKD2 are required for channel activity. Involved in renal tubulogenesis. Involved in fluid-flow mechanosensation by the primary cilium in renal epithelium. Acts as a regulator of cilium length, together with PKD2. The dynamic control of cilium length is essential in the regulation of mechanotransductive signaling. The cilium length response creates a negative feedback loop whereby fluid shear-mediated deflection of the primary cilium, which decreases intracellular cAMP, leads to cilium shortening and thus decreases flow-induced signaling. May be an ion-channel regulator. Involved in adhesive protein-protein and protein-carbohydrate interactions. Likely to be involved with polycystin-1-interacting protein 1 in the detection, sequestration and exocytosis of senescent mitochondria. The sequence is that of Polycystin-1 from Mus musculus (Mouse).